The following is an 867-amino-acid chain: Putative ubiquitin thioesterase L96 (867 aa).

Disordered stretches follow at residues 49–73 (VNQY…GKQD), 177–204 (IKSV…MKKK), 231–271 (YILS…PKYR), and 379–591 (LSTQ…YKGG). Basic residues-rich tracts occupy residues 234–258 (SRKK…RSPG) and 421–430 (KITRKPKSPR). 2 stretches are compositionally biased toward low complexity: residues 433 to 462 (PPAS…SVRA) and 472 to 551 (PPSS…KSPS). The span at 565-575 (ITVDPSVTPPS) shows a compositional bias: polar residues. The segment covering 582–591 (RPELPEYKGG) has biased composition (basic and acidic residues). An OTU domain is found at 606-745 (YKVIPVKGDG…DYHYTALTPL (140 aa)). Aspartate 614 is a catalytic residue. Cysteine 617 serves as the catalytic Nucleophile. Histidine 738 is a catalytic residue.

It catalyses the reaction Thiol-dependent hydrolysis of ester, thioester, amide, peptide and isopeptide bonds formed by the C-terminal Gly of ubiquitin (a 76-residue protein attached to proteins as an intracellular targeting signal).. Functionally, hydrolase that can remove conjugated ubiquitin from proteins and may therefore play an important regulatory role at the level of protein turnover by preventing degradation. May be involved in TIV genomic DNA packaging in a manner related to the Gag polyproteins of the mammalian viruses. This is Putative ubiquitin thioesterase L96 from Tipula iridescent virus (TIV).